A 229-amino-acid polypeptide reads, in one-letter code: Large ribosomal subunit protein uL1 (229 aa).

It belongs to the universal ribosomal protein uL1 family. Part of the 50S ribosomal subunit.

Binds directly to 23S rRNA. The L1 stalk is quite mobile in the ribosome, and is involved in E site tRNA release. Its function is as follows. Protein L1 is also a translational repressor protein, it controls the translation of the L11 operon by binding to its mRNA. The sequence is that of Large ribosomal subunit protein uL1 from Pelagibacter ubique (strain HTCC1062).